The following is a 574-amino-acid chain: ATP-dependent RNA helicase RhlB (574 aa).

The Q motif motif lies at 9-37 (VTFSSFDLHPALVAGLESAGFTRCTPIQA). Residues 40–220 (LPVALPGGDV…YEHMNEPEKL (181 aa)) enclose the Helicase ATP-binding domain. 53 to 60 (AQTGTGKT) is a binding site for ATP. A DEAD box motif is present at residues 166 to 169 (DEAD). Residues 231–393 (RVRQRIYFPS…PVTSELLTPL (163 aa)) enclose the Helicase C-terminal domain. Basic and acidic residues predominate over residues 423–432 (EQRAAEEQRR). A disordered region spans residues 423–574 (EQRAAEEQRR…RRLRSLVSGN (152 aa)). A compositionally biased stretch (gly residues) spans 435–449 (GRSGPGGGSRSGSGG). Low complexity predominate over residues 477–495 (AAAAQTEKPVVAAAAAQAP). Over residues 506-515 (PRKRRRRRNG) the composition is skewed to basic residues. Composition is skewed to low complexity over residues 523–535 (PAVA…APAA) and 553–562 (SSGSPSLLGR).

It belongs to the DEAD box helicase family. RhlB subfamily. As to quaternary structure, component of the RNA degradosome, which is a multiprotein complex involved in RNA processing and mRNA degradation.

The protein resides in the cytoplasm. It carries out the reaction ATP + H2O = ADP + phosphate + H(+). Its function is as follows. DEAD-box RNA helicase involved in RNA degradation. Has RNA-dependent ATPase activity and unwinds double-stranded RNA. In Xanthomonas oryzae pv. oryzae (strain KACC10331 / KXO85), this protein is ATP-dependent RNA helicase RhlB.